A 525-amino-acid polypeptide reads, in one-letter code: MGVLSDVADFGKDVIDDRDKWADRFKKVGHFIERNAKGDRLERVAKFGRALGDFSGKFTDFFESNLGKRMVKAARSPILAAGQHVITGMKLTTGVGDPENGRRFGEGADHMSAAGRTLDSAYPTSDWDSAASDAYLSQNNGQVTRAEALVHADQVVAAVLSREAEQIATTREVLDSEADWLGDMSLVTMATGLIPYVGRAAQTAAEIAMVTKAVGASTDQFMMMRDKADENAAEVRDAIGKYEAVAGDADDTTADDTAGDAPESEPTAAEDSSETSKEDGQSRHENPVAAPSGGGGGATSGGGGGAPSSASSAGPAGTPQVPSPPGFGAANTPTDAQPGAAAASDAAGMLGSVMGAMLGPLGGIVGGVVQAAGQALQAATQAGAQAAQLAGQAAAAPDVDRADTDEDTDKDPDAEGDKDSDKRDGEGKEDGTAPRDRESTDAMGADDDDRNAHPQAGSGTDSAGEDDKKPAMTLPPDLQAASALDTGAGSAPVHVGADFEHSQLRTVAAATLDHGIPGSAAARGA.

Disordered stretches follow at residues 244–341 and 375–494; these read AVAG…PGAA and ALQA…APVH. Acidic residues predominate over residues 248 to 258; sequence DADDTTADDTA. The span at 274-286 shows a compositional bias: basic and acidic residues; it reads ETSKEDGQSRHEN. Positions 292-306 are enriched in gly residues; it reads SGGGGGATSGGGGGA. Composition is skewed to low complexity over residues 307–319, 332–341, and 375–397; these read PSSA…AGTP, TPTDAQPGAA, and ALQA…AAAP. Residues 411-440 are compositionally biased toward basic and acidic residues; it reads DPDAEGDKDSDKRDGEGKEDGTAPRDREST.

It is found in the cytoplasm. The chain is ESX-1 secretion-associated protein EspE from Mycolicibacterium smegmatis (strain ATCC 700084 / mc(2)155) (Mycobacterium smegmatis).